Consider the following 739-residue polypeptide: Phosphoribosylformylglycinamidine synthase subunit PurL (739 aa).

The active site involves H53. The ATP site is built by Y56 and K95. E97 serves as a coordination point for Mg(2+). Residues 98-101 (SHNH) and R120 contribute to the substrate site. The Proton acceptor role is filled by H99. A Mg(2+)-binding site is contributed by D121. Q244 serves as a coordination point for substrate. Residue D274 participates in Mg(2+) binding. Substrate is bound at residue 318 to 320 (ESQ). 2 residues coordinate ATP: D501 and G538. Residue N539 participates in Mg(2+) binding. A substrate-binding site is contributed by S541.

This sequence belongs to the FGAMS family. Monomer. Part of the FGAM synthase complex composed of 1 PurL, 1 PurQ and 2 PurS subunits.

It is found in the cytoplasm. It carries out the reaction N(2)-formyl-N(1)-(5-phospho-beta-D-ribosyl)glycinamide + L-glutamine + ATP + H2O = 2-formamido-N(1)-(5-O-phospho-beta-D-ribosyl)acetamidine + L-glutamate + ADP + phosphate + H(+). It functions in the pathway purine metabolism; IMP biosynthesis via de novo pathway; 5-amino-1-(5-phospho-D-ribosyl)imidazole from N(2)-formyl-N(1)-(5-phospho-D-ribosyl)glycinamide: step 1/2. Functionally, part of the phosphoribosylformylglycinamidine synthase complex involved in the purines biosynthetic pathway. Catalyzes the ATP-dependent conversion of formylglycinamide ribonucleotide (FGAR) and glutamine to yield formylglycinamidine ribonucleotide (FGAM) and glutamate. The FGAM synthase complex is composed of three subunits. PurQ produces an ammonia molecule by converting glutamine to glutamate. PurL transfers the ammonia molecule to FGAR to form FGAM in an ATP-dependent manner. PurS interacts with PurQ and PurL and is thought to assist in the transfer of the ammonia molecule from PurQ to PurL. The polypeptide is Phosphoribosylformylglycinamidine synthase subunit PurL (Listeria monocytogenes serotype 4b (strain F2365)).